The following is a 311-amino-acid chain: Succinate dehydrogenase [ubiquinone] iron-sulfur subunit 2, mitochondrial (311 aa).

Residues 1 to 63 (MILRRTLPRL…EEIRDHRRGD (63 aa)) constitute a mitochondrion transit peptide. The tract at residues 1-70 (MILRRTLPRL…RGDAAAASPA (70 aa)) is disordered. Basic and acidic residues predominate over residues 51–63 (AKEEEIRDHRRGD). The 2Fe-2S ferredoxin-type domain maps to 77 to 168 (FRVYRWSPDA…ATTVTPLPHM (92 aa)). Residues Cys128, Cys133, and Cys148 each coordinate [2Fe-2S] cluster. Residues 211-241 (ERKRLDGLYECILCACCSAACPSYWWNAEAF) form the 4Fe-4S ferredoxin-type domain. Residues Cys221, Cys224, and Cys227 each coordinate [4Fe-4S] cluster. Cys231 is a [3Fe-4S] cluster binding site. Trp236 is a binding site for a ubiquinone. Residues Cys279 and Cys285 each contribute to the [3Fe-4S] cluster site. Cys289 contributes to the [4Fe-4S] cluster binding site.

It belongs to the succinate dehydrogenase/fumarate reductase iron-sulfur protein family. Component of complex II composed of eight subunits in plants: four classical SDH subunits SDH1, SDH2, SDH3 and SDH4 (a flavoprotein (FP), an iron-sulfur protein (IP), and a cytochrome b composed of a large and a small subunit.), as well as four subunits unknown in mitochondria from bacteria and heterotrophic eukaryotes. The cofactor is [2Fe-2S] cluster. Requires [3Fe-4S] cluster as cofactor. [4Fe-4S] cluster is required as a cofactor.

The protein localises to the mitochondrion inner membrane. The enzyme catalyses a quinone + succinate = fumarate + a quinol. The protein operates within carbohydrate metabolism; tricarboxylic acid cycle; fumarate from succinate (eukaryal route): step 1/1. Iron-sulfur protein (IP) subunit of succinate dehydrogenase (SDH) that is involved in complex II of the mitochondrial electron transport chain and is responsible for transferring electrons from succinate to ubiquinone (coenzyme Q). This chain is Succinate dehydrogenase [ubiquinone] iron-sulfur subunit 2, mitochondrial, found in Oryza sativa subsp. japonica (Rice).